The primary structure comprises 580 residues: Tripeptidyl-peptidase sed5 (580 aa).

The interval 1 to 21 (MYPLDGSARPHPPGTTRLNSV) is disordered. The 387-residue stretch at 181–567 (RAQRLIVAEL…RRTLEELRRI (387 aa)) folds into the Peptidase S53 domain. An N-linked (GlcNAc...) asparagine glycan is attached at N236. Active-site charge relay system residues include E269, D273, and S479. 2 residues coordinate Ca(2+): D523 and I524. N-linked (GlcNAc...) asparagine glycosylation is present at N529. The Ca(2+) site is built by G543, G545, and D547.

Ca(2+) is required as a cofactor.

The protein resides in the secreted. The protein localises to the extracellular space. The enzyme catalyses Release of an N-terminal tripeptide from a polypeptide.. Secreted tripeptidyl-peptidase which degrades proteins at acidic pHs and is involved in virulence. The polypeptide is Tripeptidyl-peptidase sed5 (sed5) (Aspergillus fumigatus (strain ATCC MYA-4609 / CBS 101355 / FGSC A1100 / Af293) (Neosartorya fumigata)).